Reading from the N-terminus, the 217-residue chain is Putative thymidylate synthase (217 aa).

Cysteine 139 is a catalytic residue.

It belongs to the thymidylate synthase family. Archaeal-type ThyA subfamily. As to quaternary structure, monomer.

The protein localises to the cytoplasm. Its pathway is pyrimidine metabolism; dTTP biosynthesis. Its function is as follows. May catalyze the biosynthesis of dTMP using an unknown cosubstrate. This is Putative thymidylate synthase from Methanococcoides burtonii (strain DSM 6242 / NBRC 107633 / OCM 468 / ACE-M).